A 262-amino-acid polypeptide reads, in one-letter code: Ornithine carbamoyltransferase (262 aa).

Residues 3-7, Q30, R54, and 81-84 each bind carbamoyl phosphate; these read STRTR and HPTQ. L-ornithine is bound by residues N114, D178, and 182–183; that span reads SM. Carbamoyl phosphate is bound by residues 219-222 and T247; that span reads HCLP.

It belongs to the aspartate/ornithine carbamoyltransferase superfamily. OTCase family.

Its subcellular location is the cytoplasm. It carries out the reaction carbamoyl phosphate + L-ornithine = L-citrulline + phosphate + H(+). It functions in the pathway amino-acid biosynthesis; L-arginine biosynthesis; L-arginine from L-ornithine and carbamoyl phosphate: step 1/3. This is Ornithine carbamoyltransferase (argF) from Neisseria cinerea.